A 308-amino-acid polypeptide reads, in one-letter code: Protein Bel-1 (308 aa).

The DNA-binding element occupies 94-203 (SKSTCKRLIL…KGTRLPKRRC (110 aa)). The segment at 200-242 (KRRCNPSRRYETFREHPPTRKRRSKEGIPTDQQPSTSNGDPMA) is disordered. Residues 207-217 (RRYETFREHPP) are compositionally biased toward basic and acidic residues. The Nuclear localization signal signature appears at 217–226 (PTRKRRSKEG). The tract at residues 228–304 (PTDQQPSTSN…PLGSSEDQLL (77 aa)) is transactivation domain. Positions 229–238 (TDQQPSTSNG) are enriched in polar residues.

As to quaternary structure, homodimer or homomultimer. Forms complexes with the host nuclear factors NFIA, NFIB, NFIC or NFIX.

Its subcellular location is the host nucleus. Its function is as follows. Transcriptional transactivator that activates the viral internal promoter (IP), thereby enhancing its own expression. This transactivation is repressed by nuclear factor I. Also transactivates the long terminal repeat (LTR) promoter, thereby inducing structural gene expression, initiating the late phase of infection. It is therefore a key regulator of viral gene expression. It directly binds to and activates DNA target sites of viral promoters and those of distinct cellular genes. Required for viral replication. The chain is Protein Bel-1 (bel1) from Simian foamy virus type 1 (SFVmac).